Here is a 730-residue protein sequence, read N- to C-terminus: Elongation factor 2 (730 aa).

The tr-type G domain occupies 19–260; that stretch reads VMIRNIAIIA…MVIRFLPSPI (242 aa). Residues 28 to 35, 94 to 98, and 148 to 151 contribute to the GTP site; these read AHIDHGKT, DTPGH, and NKVD. H596 carries the diphthamide modification.

Belongs to the TRAFAC class translation factor GTPase superfamily. Classic translation factor GTPase family. EF-G/EF-2 subfamily.

It is found in the cytoplasm. In terms of biological role, catalyzes the GTP-dependent ribosomal translocation step during translation elongation. During this step, the ribosome changes from the pre-translocational (PRE) to the post-translocational (POST) state as the newly formed A-site-bound peptidyl-tRNA and P-site-bound deacylated tRNA move to the P and E sites, respectively. Catalyzes the coordinated movement of the two tRNA molecules, the mRNA and conformational changes in the ribosome. The protein is Elongation factor 2 (fusA) of Methanococcoides methylutens.